A 573-amino-acid chain; its full sequence is uncharacterized protein (573 aa).

Disordered regions lie at residues 1–33 and 60–101; these read MLQQ…SIPR and LVAN…SRYD. Residues 60-70 show a composition bias toward polar residues; the sequence is LVANRSDNNGN. The N-linked (GlcNAc...) asparagine glycan is linked to asparagine 63. Over residues 84–95 the composition is skewed to low complexity; that stretch reads SSSTSSLPSTRN. 10 tandem repeats follow at residues 102-103, 104-105, 106-107, 108-109, 110-111, 112-113, 114-115, 116-117, 118-119, and 120-121. Positions 102 to 121 are 10 X 2 AA tandem repeats of N-M; sequence NMNMNMNMNMNMNMNMNMNM. N-linked (GlcNAc...) asparagine glycosylation is present at asparagine 123. Disordered stretches follow at residues 150–174, 192–271, 286–317, and 357–379; these read IPEK…PRVR, QFPN…IRSN, KSSN…PITS, and NNRI…DKRT. Positions 157–170 are enriched in polar residues; sequence SRYSLRSSPPTYSN. The span at 208–225 shows a compositional bias: low complexity; it reads LPPSSTFPDSPSSSSLPL. Residues 226–252 show a composition bias toward polar residues; sequence TQTGGPSSADNDSIATGTNNRSPQQTK. Asparagine 236 is a glycosylation site (N-linked (GlcNAc...) asparagine). 2 N-linked (GlcNAc...) asparagine glycosylation sites follow: asparagine 437 and asparagine 442. Low complexity-rich tracts occupy residues 441 to 457 and 466 to 483; these read INSS…SSSS and SISS…SKSK. Residues 441 to 483 are disordered; that stretch reads INSSISSPAPSSSSSSSLVSRGPMQSISSSPTPAPSSGSSKSK. N-linked (GlcNAc...) asparagine glycosylation is found at asparagine 498, asparagine 535, and asparagine 541.

This sequence to yeast AFR1. N-glycosylated.

This is an uncharacterized protein from Saccharomyces cerevisiae (strain ATCC 204508 / S288c) (Baker's yeast).